Reading from the N-terminus, the 1064-residue chain is MNSNGHEEEKKLGNGVVGILAETVNKWERRTPLTPSHCARLLHGGKDRTGISRIVVQPSAKRIHHDALYEDVGCEISDDLSDCGLILGIKQPELEMILPERAYAFFSHTHKAQKENMPLLDKILSERVTLCDYELIVGDHGKRLLAFGKYAGRAGLVDFLHGLGQRKLILGYSTPFLSLGASYMYSSLAAAKAAVISVGEEIASQGLPLGICPLVFVFTGTGNVSLGAQEIFKLLPHTFVEPSKLPELFVKDKGISQNGISTKRVYQVYGCIITSQDMVEHKDPSKSFDKADYYAHPEHYNPVFHEKISPYTSVLVNCMYWEKRFPCLLSTKQLQDLTKKGLPLVGICDITCDIGGSIEFVNRATLIDSPFFRFNPSNNSYYDDMDGDGVLCMAVDILPTEFAKEASQHFGDILSGFVGSLASMTEISDLPAHLKRACISYRGELTSLYEYIPRMRKSNPEEAQDNIIANGVSSQRTFNILVSLSGHLFDKFLINEALDMIEAAGGSFHLAKCELGQSADAESYSELEVGADDKRVLDQIIDSLTRLANPNEDYISPHREANKISLKIGKVQQENEIKEKPEMTKKSGVLILGAGRVCRPAADFLASVRTISSQQWYKTYFGADSEEKTDVHVIVASLYLKDAKETVEGISDVEAVRLDVSDSESLLKYVSQVDVVLSLLPASCHAVVAKTCIELKKHLVTASYVDDETSMLHEKAKSAGITILGEMGLDPGIDHMMAMKMINDAHIKKGKVKSFTSYCGGLPSPAAANNPLAYKFSWNPAGAIRAGQNPAKYKSNGDIIHVDGKNLYDSAARFRVPNLPAFALECFPNRDSLVYGEHYGIESEATTIFRGTLRYEGFSMIMATLSKLGFFDSEANQVLSTGKRITFGALLSNILNKDADNESEPLAGEEEISKRIIKLGHSKETAAKAAKTIVFLGFNEEREVPSLCKSVFDATCYLMEEKLAYSGNEQDMVLLHHEVEVEFLESKRIEKHTATLLEFGDIKNGQTTTAMAKTVGIPAAIGALLLIEDKIKTRGVLRPLEAEVYLPALDILQAYGIKLMEKAE.

The lysine-ketoglutarate reductase stretch occupies residues 24–445 (VNKWERRTPL…RACISYRGEL (422 aa)). A Phosphothreonine modification is found at T238. S458 bears the Phosphoserine mark. Residues 583–1064 (MTKKSGVLIL…YGIKLMEKAE (482 aa)) form a saccharopine dehydrogenase region. Residues 703-704 (SY), D730, R830, and 852-854 (TLR) each bind L-saccharopine. 729–731 (LDP) lines the NADP(+) pocket.

It in the N-terminal section; belongs to the AlaDH/PNT family. In the C-terminal section; belongs to the saccharopine dehydrogenase family. As to quaternary structure, homodimer. In terms of processing, phosphorylation of Ser-458 seems important for the LKR activity. As to expression, ubiquitous, with higher levels in flowers. Isoform Long is mostly present in young leaves, cotyledons, root tips and mature root parts. Whereas isoform Short is mostly expressed in cotyledons and at low levels in all root parts.

It is found in the cytoplasm. It catalyses the reaction L-saccharopine + NADP(+) + H2O = L-lysine + 2-oxoglutarate + NADPH + H(+). The catalysed reaction is L-saccharopine + NAD(+) + H2O = (S)-2-amino-6-oxohexanoate + L-glutamate + NADH + H(+). It functions in the pathway amino-acid degradation; L-lysine degradation via saccharopine pathway; glutaryl-CoA from L-lysine: step 1/6. It participates in amino-acid degradation; L-lysine degradation via saccharopine pathway; glutaryl-CoA from L-lysine: step 2/6. The LKR activity is stimulated by NaCl. Functionally, bifunctional enzyme that catalyzes the first two steps in lysine degradation. The N-terminal and the C-terminal contain lysine-oxoglutarate reductase and saccharopine dehydrogenase activity, respectively. Negatively regulates free Lys accumulation in seeds. This Arabidopsis thaliana (Mouse-ear cress) protein is Alpha-aminoadipic semialdehyde synthase (LKR/SDH).